The chain runs to 3081 residues: Cilia- and flagella-associated protein 54 (3081 aa).

9 disordered regions span residues 542–579, 591–626, 910–942, 1406–1451, 1518–1586, 1636–1657, 2176–2210, 2229–2306, and 2776–2806; these read SGTA…AGGA, TQTA…QSSL, PPQP…GARK, ADAP…GITP, ESIL…YPVV, RRAA…EERP, GERT…LPEP, MASG…SQRA, and ARPV…SGDG. Low complexity predominate over residues 564–579; sequence GGSASPPNGSSGAGGA. Positions 1428–1449 are enriched in pro residues; that stretch reads MPPPVPDPSAAGPPPLTPPEGI. A compositionally biased stretch (basic and acidic residues) spans 1538–1550; sequence GGKDDKKKDDKAP. Low complexity-rich tracts occupy residues 1638–1648, 2181–2199, and 2240–2269; these read AALAASASTAG, APKP…AAAA, and EPSS…SPTG. Residues 2289 to 2301 are compositionally biased toward pro residues; the sequence is PEVPGPPPPPPPS. Positions 2776 to 2788 are enriched in low complexity; that stretch reads ARPVATSSSGARP. Over residues 2796-2805 the composition is skewed to gly residues; the sequence is KPGAGGGSGD.

This sequence belongs to the CFAP54 family. In terms of assembly, part of the PDCP1 complex composed of CFAP46, CFAP54, CFAP74 and CFAP221; the PDCP1 complex binds calmodulin.

It localises to the cytoplasm. Its subcellular location is the cytoskeleton. The protein resides in the cilium axoneme. The polypeptide is Cilia- and flagella-associated protein 54 (Chlamydomonas reinhardtii (Chlamydomonas smithii)).